A 434-amino-acid polypeptide reads, in one-letter code: GTPase Der (434 aa).

2 consecutive EngA-type G domains span residues 3 to 167 (NIVA…PEIE) and 175 to 350 (PRFA…ESRS). GTP is bound by residues 9-16 (GRPNVGKS), 56-60 (DTGGY), 119-122 (NKVD), 181-188 (GRPNAGKS), 228-232 (DTAGI), and 293-296 (NKWD). The region spanning 351–434 (KKIKTRQFND…VPISIFFRKK (84 aa)) is the KH-like domain.

Belongs to the TRAFAC class TrmE-Era-EngA-EngB-Septin-like GTPase superfamily. EngA (Der) GTPase family. In terms of assembly, associates with the 50S ribosomal subunit.

Its function is as follows. GTPase that plays an essential role in the late steps of ribosome biogenesis. The protein is GTPase Der of Christiangramia forsetii (strain DSM 17595 / CGMCC 1.15422 / KT0803) (Gramella forsetii).